The primary structure comprises 149 residues: Oligosaccharyltransferase complex subunit ostc-B (149 aa).

Topologically, residues 1 to 32 (MESLYRIPFTVLECPNLKLKKPSWLHMPSAMT) are cytoplasmic. Residues 33–53 (VYAMVVVSYFLITGGIIYDVI) traverse the membrane as a helical segment. Over 54–83 (VEPPSVGSMTDEHGHQRPVAFLAYRVNGQY) the chain is Extracellular. A helical transmembrane segment spans residues 84–104 (IMEGLASSFLFTMGGLGFIIL). The Cytoplasmic segment spans residues 105 to 117 (DRSNAPNIPKLNR). The helical transmembrane segment at 118-138 (FLLLFIGFVCVLLSFFMARVF) threads the bilayer. The Extracellular segment spans residues 139–149 (MRMKLPGYLMG).

The protein belongs to the OSTC family. In terms of assembly, specific component of the STT3A-containing form of the oligosaccharyltransferase (OST) complex.

It is found in the membrane. It participates in protein modification; protein glycosylation. Specific component of the STT3A-containing form of the oligosaccharyl transferase (OST) complex that catalyzes the initial transfer of a defined glycan (Glc(3)Man(9)GlcNAc(2) in eukaryotes) from the lipid carrier dolichol-pyrophosphate to an asparagine residue within an Asn-X-Ser/Thr consensus motif in nascent polypeptide chains, the first step in protein N-glycosylation. N-glycosylation occurs cotranslationally and the complex associates with the Sec61 complex at the channel-forming translocon complex that mediates protein translocation across the endoplasmic reticulum (ER). All subunits are required for a maximal enzyme activity. This is Oligosaccharyltransferase complex subunit ostc-B from Xenopus laevis (African clawed frog).